Here is a 275-residue protein sequence, read N- to C-terminus: 4-deoxy-L-threo-5-hexosulose-uronate ketol-isomerase (275 aa).

Zn(2+) is bound by residues His193, His195, Glu200, and His242.

The protein belongs to the KduI family. Zn(2+) is required as a cofactor.

It catalyses the reaction 5-dehydro-4-deoxy-D-glucuronate = 3-deoxy-D-glycero-2,5-hexodiulosonate. The protein operates within glycan metabolism; pectin degradation; 2-dehydro-3-deoxy-D-gluconate from pectin: step 4/5. Functionally, catalyzes the isomerization of 5-dehydro-4-deoxy-D-glucuronate to 3-deoxy-D-glycero-2,5-hexodiulosonate. The polypeptide is 4-deoxy-L-threo-5-hexosulose-uronate ketol-isomerase (Bacillus pumilus (strain SAFR-032)).